Consider the following 328-residue polypeptide: uncharacterized protein (328 aa).

The signal sequence occupies residues 1 to 25; that stretch reads MKLFNFKKLSMLIAGFTLVTSPALA.

It belongs to the bacterial solute-binding protein 7 family.

Its subcellular location is the periplasm. This is an uncharacterized protein from Haemophilus influenzae (strain ATCC 51907 / DSM 11121 / KW20 / Rd).